The primary structure comprises 322 residues: Probable 5-dehydro-4-deoxyglucarate dehydratase 2 (322 aa).

The protein belongs to the DapA family.

The enzyme catalyses 5-dehydro-4-deoxy-D-glucarate + H(+) = 2,5-dioxopentanoate + CO2 + H2O. It participates in carbohydrate acid metabolism; D-glucarate degradation; 2,5-dioxopentanoate from D-glucarate: step 2/2. The chain is Probable 5-dehydro-4-deoxyglucarate dehydratase 2 from Streptomyces coelicolor (strain ATCC BAA-471 / A3(2) / M145).